The primary structure comprises 457 residues: MSIHFSSRSTAYPGRGAQVRLSSGRASFGSRSLYGLGSSRPRVAVRSAYGGPVGAGIREITINQSLLAPLSVDIDPTIQQVRQEEREQIKTLNNKFASFIDKVRFLEQQNKMLETKWALLQEQKSAKSSQLPRIFEAQIAGLRQQLETLQLDGGRLEVELRNMQDVVEDFKNKYEEEINRRTAAENEFVLLKKDVDAAYTNKVELEAKADSLQDEINFLKTLHETELAELQSQISDTSVVLSMDNSRSLDLDGIIADVKAQYEEMANHSRAEAEAWYQTKFETLQAQAGKHGDDLRNTRNEIAEMNRSIQRLQAEIDTLKNQRAKLESSIAEAEEQGELAIKDAHAKQGELEAALQKAKQDVARQLREYQELLNTKLALDIEIATYRKLLEGEESRLSGDGMGPVNISVVNSTGGNGGKLIFGGTMGSNALSFSGGPGALRAYSIKTTSTTRRGTHN.

S2 is subject to N-acetylserine. At S2 the chain carries Phosphoserine. The head stretch occupies residues 2 to 84 (SIHFSSRSTA…DPTIQQVRQE (83 aa)). The O-linked (GlcNAc) serine glycan is linked to S7. R15 carries the post-translational modification Dimethylated arginine; alternate. R15 is subject to Omega-N-methylarginine; alternate. 2 positions are modified to phosphoserine: S47 and S65. A coil 1A region spans residues 84-120 (EEREQIKTLNNKFASFIDKVRFLEQQNKMLETKWALL). Residues 85 to 397 (EREQIKTLNN…KLLEGEESRL (313 aa)) enclose the IF rod domain. Position 91 is a phosphothreonine (T91). The segment at 121–138 (QEQKSAKSSQLPRIFEAQ) is linker 1. Residue K124 forms a Glycyl lysine isopeptide (Lys-Gly) (interchain with G-Cter in SUMO2) linkage. The coil 1B stretch occupies residues 139–230 (IAGLRQQLET…TLHETELAEL (92 aa)). Residue K173 is modified to N6-acetyllysine. A phosphoserine mark is found at S211, S246, and S248. The linker 12 stretch occupies residues 231–254 (QSQISDTSVVLSMDNSRSLDLDGI). The interval 255–393 (IADVKAQYEE…ATYRKLLEGE (139 aa)) is coil 2. Glycyl lysine isopeptide (Lys-Gly) (interchain with G-Cter in SUMO2) cross-links involve residues K259 and K280. T283 carries the post-translational modification Phosphothreonine. Residues K290 and K325 each participate in a glycyl lysine isopeptide (Lys-Gly) (interchain with G-Cter in SUMO2) cross-link. The interval 394–457 (ESRLSGDGMG…TSTTRRGTHN (64 aa)) is tail.

Belongs to the intermediate filament family. As to quaternary structure, heterotetramer of two type I and two type II keratins. Interacts with eukaryotic translation initiator factor 3 (eIF3) subunit EIF3S10. Interacts with GPER1. In terms of processing, arg-15 is dimethylated, probably to asymmetric dimethylarginine. In terms of tissue distribution, expressed in most simple epithelia tested including liver, lactating mammary gland, lung, kidney, stomach, duodenum, colon, oviduct, uterus, pancreas, epididymis, prostate, preputial gland and mesothelium, and in most stratified epithelia tested including dorsal skin, paw/toe, tail, tongue, cervix, forestomach, and bladder. Also expressed in Henle layer of the inner root sheath of whisker follicle.

Blocks interferon-dependent interphase and stimulates DNA synthesis in cells. This chain is Keratin, type II cytoskeletal 7, found in Mus musculus (Mouse).